The following is a 597-amino-acid chain: Aspartate--tRNA(Asp/Asn) ligase (597 aa).

L-aspartate is bound at residue Glu-175. Residues 199–202 form an aspartate region; the sequence is QQYK. 2 residues coordinate L-aspartate: Arg-221 and His-454. Residue 221–223 participates in ATP binding; it reads RDE. Glu-488 is a binding site for ATP. Arg-495 serves as a coordination point for L-aspartate. 540–543 contributes to the ATP binding site; the sequence is GIDR.

Belongs to the class-II aminoacyl-tRNA synthetase family. Type 1 subfamily. In terms of assembly, homodimer.

The protein localises to the cytoplasm. It catalyses the reaction tRNA(Asx) + L-aspartate + ATP = L-aspartyl-tRNA(Asx) + AMP + diphosphate. Aspartyl-tRNA synthetase with relaxed tRNA specificity since it is able to aspartylate not only its cognate tRNA(Asp) but also tRNA(Asn). Reaction proceeds in two steps: L-aspartate is first activated by ATP to form Asp-AMP and then transferred to the acceptor end of tRNA(Asp/Asn). This is Aspartate--tRNA(Asp/Asn) ligase from Bartonella tribocorum (strain CIP 105476 / IBS 506).